A 928-amino-acid chain; its full sequence is Sodium/calcium exchanger 3 (928 aa).

A signal peptide spans 1 to 30; it reads MAWLRLQPLTSAFLHFGLVTFVLFLNCLRA. The Extracellular portion of the chain corresponds to 31-73; sequence EAGDSGDVPSAGQNNESCSGSSDCKEGVILPIWYPENPSLGDK. A glycan (N-linked (GlcNAc...) asparagine) is linked at asparagine 45. Residues 74 to 94 traverse the membrane as a helical segment; the sequence is IARVIVYFVALIYMFLGVSII. Topologically, residues 95-147 are cytoplasmic; the sequence is ADRFMASIEVITSQEREVTIKKPNGETSTTTIRVWNETVSNLTLMALGSSAPE. Residues 148–168 traverse the membrane as a helical segment; the sequence is ILLSLIEVCGHGFIAGDLGPS. Threonine 169 is a topological domain (extracellular). Residues 170–190 traverse the membrane as a helical segment; that stretch reads IVGSAAFNMFIIIGICVYVIP. Topologically, residues 191–201 are cytoplasmic; the sequence is DGETRKIKHLR. The chain crosses the membrane as a helical span at residues 202–222; sequence VFFVTAAWSIFAYIWLYMILA. The Extracellular portion of the chain corresponds to 223 to 230; sequence VFSPGVVQ. Residues 231–251 form a helical membrane-spanning segment; that stretch reads VWEGLLTLFFFPVCVLLAWVA. Residues 252 to 727 lie on the Cytoplasmic side of the membrane; it reads DKRLLFYKYM…DESGEERLPS (476 aa). A putative calmodulin-binding region region spans residues 253 to 272; it reads KRLLFYKYMHKKYRTDKHRG. Calx-beta domains follow at residues 390–485 and 519–618; these read EPED…VRLS and ATVT…VIEM. Ca(2+) contacts are provided by glutamate 409, aspartate 445, aspartate 470, aspartate 471, isoleucine 473, glutamate 475, glutamate 478, aspartate 525, aspartate 526, aspartate 527, glutamate 543, aspartate 579, aspartate 605, and glutamate 673. Residues 728-748 traverse the membrane as a helical segment; it reads CFDYVMHFLTVFWKVLFACVP. The Extracellular portion of the chain corresponds to 749 to 755; the sequence is PTEYCHG. Residues 756–776 traverse the membrane as a helical segment; that stretch reads WACFVVSILIIGMLTAIIGDL. Residues 777–779 lie on the Cytoplasmic side of the membrane; that stretch reads ASH. A helical membrane pass occupies residues 780–800; sequence FGCTIGLKDSVTAVVFVAFGT. Topologically, residues 801-829 are extracellular; sequence SVPDTFASKAAALQDVYADASIGNVTGSN. An N-linked (GlcNAc...) asparagine glycan is attached at asparagine 824. The helical transmembrane segment at 830-850 threads the bilayer; the sequence is AVNVFLGIGLAWSVAAIYWAM. The Cytoplasmic portion of the chain corresponds to 851–861; it reads QGQEFHVSAGT. Residues 862–882 traverse the membrane as a helical segment; that stretch reads LAFSVTLFTIFAFVCLSVLLY. The Extracellular portion of the chain corresponds to 883–904; sequence RRRPHLGGELGGPRGCKLATTW. A helical transmembrane segment spans residues 905–925; sequence LFVSLWLLYILFATLEAYCYI. The Cytoplasmic segment spans residues 926–928; the sequence is KGF.

Belongs to the Ca(2+):cation antiporter (CaCA) (TC 2.A.19) family. SLC8 subfamily. Interacts with AKAP1. In terms of tissue distribution, detected in gray and white matter in the spinal cord. Detected in hippocampus neurons. Detected in brain cortex neurons. Detected in skeletal muscle (at protein level). Isoform 1 and isoform 2 are highly expressed in brain; levels are higher for isoform 2. Isoform 1 and isoform 2 are detected in soleus muscle; levels are higher for isoform 1. Detected in gastrocnemius muscle.

It is found in the cell membrane. It localises to the perikaryon. The protein localises to the cell projection. Its subcellular location is the dendrite. The protein resides in the dendritic spine. It is found in the sarcolemma. It localises to the cytoplasm. The protein localises to the sarcoplasm. Its subcellular location is the cell junction. The protein resides in the mitochondrion outer membrane. It is found in the perinuclear region. It localises to the endoplasmic reticulum membrane. The enzyme catalyses Ca(2+)(in) + 3 Na(+)(out) = Ca(2+)(out) + 3 Na(+)(in). Its activity is regulated as follows. Calcium transport is stimulated by cytoplasmic Ca(2+) and is inhibited by Na(+). Isoform 1 is more sensitive to stimulation by Ca(2+) than isoform 2. Isoform 2 is more sensitive to inactivation by Na(+). Mediates the electrogenic exchange of Ca(2+) against Na(+) ions across the cell membrane, and thereby contributes to the regulation of cytoplasmic Ca(2+) levels and Ca(2+)-dependent cellular processes. Contributes to cellular Ca(2+) homeostasis in excitable cells, both in muscle and in brain. In a first phase, voltage-gated channels mediate the rapid increase of cytoplasmic Ca(2+) levels due to release of Ca(2+) stores from the endoplasmic reticulum. SLC8A3 mediates the export of Ca(2+) from the cell during the next phase, so that cytoplasmic Ca(2+) levels rapidly return to baseline. Contributes to Ca(2+) transport during excitation-contraction coupling in muscle. In neurons, contributes to the rapid decrease of cytoplasmic Ca(2+) levels back to baseline after neuronal activation, and thereby contributes to modulate synaptic plasticity, learning and memory. Required for normal oligodendrocyte differentiation and for normal myelination. Mediates Ca(2+) efflux from mitochondria and contributes to mitochondrial Ca(2+) ion homeostasis. Isoform 1 displays higher calcium exchanger activity than isoform 2, probably because isoform 1 has a lower threshold for activation by cytoplasmic Ca(2+). The sequence is that of Sodium/calcium exchanger 3 from Mus musculus (Mouse).